A 198-amino-acid polypeptide reads, in one-letter code: T-cell surface glycoprotein CD3 epsilon chain (198 aa).

A signal peptide spans Met-1–Gly-21. At Gln-22–Asp-117 the chain is on the extracellular side. One can recognise an Ig-like domain in the interval Gln-37 to Ala-107. Residues Cys-49 and Cys-89 are joined by a disulfide bond. The helical transmembrane segment at Val-118–Leu-138 threads the bilayer. The Cytoplasmic segment spans residues Val-139–Ile-198. The interval Pro-152–Ile-198 is disordered. The NUMB-binding region stretch occupies residues Gln-166 to Arg-183. The ITAM domain occupies Glu-169–Arg-196. Residues Arg-170–Pro-177 are proline-rich sequence. A phosphotyrosine mark is found at Tyr-179 and Tyr-190. Polar residues predominate over residues Asp-188–Ile-198.

In terms of assembly, the TCR-CD3 complex is composed of a CD3D/CD3E and a CD3G/CD3E heterodimers that preferentially associate with TCRalpha and TCRbeta, respectively, to form TCRalpha/CD3E/CD3G and TCRbeta/CD3G/CD3E trimers. In turn, the hexamer interacts with CD3Z homodimer to form the TCR-CD3 complex. Alternatively, TCRalpha and TCRbeta can be replaced by TCRgamma and TCRdelta. Interacts with CD6. Interacts (via Proline-rich sequence) with NCK1; the interaction is ligand dependent but independent of tyrosine kinase activation. In terms of processing, phosphorylated on Tyr residues after T-cell receptor triggering by LCK in association with CD4/CD8.

Its subcellular location is the cell membrane. In terms of biological role, part of the TCR-CD3 complex present on T-lymphocyte cell surface that plays an essential role in adaptive immune response. When antigen presenting cells (APCs) activate T-cell receptor (TCR), TCR-mediated signals are transmitted across the cell membrane by the CD3 chains CD3D, CD3E, CD3G and CD3Z. All CD3 chains contain immunoreceptor tyrosine-based activation motifs (ITAMs) in their cytoplasmic domain. Upon TCR engagement, these motifs become phosphorylated by Src family protein tyrosine kinases LCK and FYN, resulting in the activation of downstream signaling pathways. In addition of this role of signal transduction in T-cell activation, CD3E plays an essential role in correct T-cell development. Also participates in internalization and cell surface down-regulation of TCR-CD3 complexes via endocytosis sequences present in CD3E cytosolic region. In addition to its role as a TCR coreceptor, it serves as a receptor for ITPRIPL1. Ligand recognition inhibits T-cell activation by promoting interaction with NCK1, which prevents CD3E-ZAP70 interaction and blocks the ERK-NFkB signaling cascade and calcium influx. The chain is T-cell surface glycoprotein CD3 epsilon chain (CD3E) from Macaca fascicularis (Crab-eating macaque).